The following is a 367-amino-acid chain: MLSAGIVGLPNVGKSTLFSAITNLQVEIANYPFATIEPNTGIVNVSDERLDKLASLINPEKIVYTTFRFVDIAGLVKGASQGQGLGNQFLANIREVDLICHVVRCFQDKKIVHVNNTIDPVFDFEIIVNELIQADFELITNRIGKLKRKAESGDKIAKEEFVLLEIVLNGLKQGQMPIQTLSESELKTIKSLNLLTAKPILIVANVSENDLLNLDNNEALKKLNAFLDQKKIPKAITVCSLIEKELSGLKLEQRQYFLDELGLKNYSGLNRVIQAAYQTLNLWSFFTFGKKEVRAWTFKKGWNAPQCAGQIHSDFEKGFIKVEVISWDQLFAMKSLQEAKKQGLIRLEGKNYLIKDGDVCNFKFNVT.

An OBG-type G domain is found at 2-258 (LSAGIVGLPN…LKLEQRQYFL (257 aa)). 11 to 16 (NVGKST) contacts ATP. Residues S15 and T35 each contribute to the Mg(2+) site. In terms of domain architecture, TGS spans 281-364 (NLWSFFTFGK…KDGDVCNFKF (84 aa)).

The protein belongs to the TRAFAC class OBG-HflX-like GTPase superfamily. OBG GTPase family. YchF/OLA1 subfamily. It depends on Mg(2+) as a cofactor.

Functionally, ATPase that binds to both the 70S ribosome and the 50S ribosomal subunit in a nucleotide-independent manner. This Mycoplasma genitalium (strain ATCC 33530 / DSM 19775 / NCTC 10195 / G37) (Mycoplasmoides genitalium) protein is Ribosome-binding ATPase YchF.